The primary structure comprises 276 residues: Probable endonuclease 4 (276 aa).

Zn(2+) is bound by residues H65, H105, E141, D175, H178, H210, D223, H225, and E255.

Belongs to the AP endonuclease 2 family. Zn(2+) serves as cofactor.

It carries out the reaction Endonucleolytic cleavage to 5'-phosphooligonucleotide end-products.. Functionally, endonuclease IV plays a role in DNA repair. It cleaves phosphodiester bonds at apurinic or apyrimidinic (AP) sites, generating a 3'-hydroxyl group and a 5'-terminal sugar phosphate. This chain is Probable endonuclease 4, found in Symbiobacterium thermophilum (strain DSM 24528 / JCM 14929 / IAM 14863 / T).